The chain runs to 141 residues: Large ribosomal subunit protein uL11 (141 aa).

Belongs to the universal ribosomal protein uL11 family. In terms of assembly, part of the ribosomal stalk of the 50S ribosomal subunit. Interacts with L10 and the large rRNA to form the base of the stalk. L10 forms an elongated spine to which L12 dimers bind in a sequential fashion forming a multimeric L10(L12)X complex. In terms of processing, one or more lysine residues are methylated.

Functionally, forms part of the ribosomal stalk which helps the ribosome interact with GTP-bound translation factors. The polypeptide is Large ribosomal subunit protein uL11 (Gloeobacter violaceus (strain ATCC 29082 / PCC 7421)).